The following is a 143-amino-acid chain: Aspartate 1-decarboxylase (143 aa).

The active-site Schiff-base intermediate with substrate; via pyruvic acid is the serine 25. Pyruvic acid (Ser) is present on serine 25. Residue threonine 57 participates in substrate binding. Tyrosine 58 serves as the catalytic Proton donor. 73–75 (GAA) contacts substrate.

It belongs to the PanD family. As to quaternary structure, heterooctamer of four alpha and four beta subunits. It depends on pyruvate as a cofactor. Is synthesized initially as an inactive proenzyme, which is activated by self-cleavage at a specific serine bond to produce a beta-subunit with a hydroxyl group at its C-terminus and an alpha-subunit with a pyruvoyl group at its N-terminus.

The protein localises to the cytoplasm. It catalyses the reaction L-aspartate + H(+) = beta-alanine + CO2. Its pathway is cofactor biosynthesis; (R)-pantothenate biosynthesis; beta-alanine from L-aspartate: step 1/1. Its function is as follows. Catalyzes the pyruvoyl-dependent decarboxylation of aspartate to produce beta-alanine. The protein is Aspartate 1-decarboxylase of Mycobacterium ulcerans (strain Agy99).